Consider the following 656-residue polypeptide: Anion exchange transporter (656 aa).

At 1-75 (MTGAKRKKKS…LAFAVLSSVH (75 aa)) the chain is on the cytoplasmic side. A helical transmembrane segment spans residues 76-96 (PVFGLYGSLFPAIIYAIFGMG). Residues 97-144 (HHVATGTFALTSLISANAVERIVPQNMQNLTTQSNTSVLGLSDFEMQR) are Extracellular-facing. A helical membrane pass occupies residues 145 to 165 (IHVAAAVSFLGGVIQVAMFVL). Position 166 (Q166) is a topological domain, cytoplasmic. The chain crosses the membrane as a helical span at residues 167–187 (LGSATFVVTEPVISAMTTGAA). The Extracellular segment spans residues 188–202 (THVVTSQVKYLLGMK). A helical transmembrane segment spans residues 203–223 (MPYISGPLGFFYIYAYVFENI). Residues 224-227 (KSVR) are Cytoplasmic-facing. A helical transmembrane segment spans residues 228–248 (LEALLLSLLSIVVLVLVKELN). Residues 249 to 254 (EQFKRK) are Extracellular-facing. The chain crosses the membrane as a helical span at residues 255 to 275 (IKVVLPVDLVLIIAASFACYC). The Cytoplasmic segment spans residues 276–306 (TNMENTYGLEVVGHIPQGIPSPRAPPMNILS). Residues 307 to 327 (AVITEAFGVALVGYVASLALA) form a helical membrane-spanning segment. Over 328–343 (QGSAKKFKYSIDDNQE) the chain is Extracellular. The chain crosses the membrane as a helical span at residues 344–364 (FLAHGLSNIVSSFFFCIPSAA). Residues 365–383 (AMGRTAGLYSTGAKTQVAC) are Cytoplasmic-facing. Transmembrane regions (helical) follow at residues 384-404 (LISCIFVLIVIYAIGPLLYWL) and 405-425 (PMCVLASIIVVGLKGMLIQFR). The Extracellular portion of the chain corresponds to 426–448 (DLKKYWNVDKIDWGIWVSTYVFT). A helical transmembrane segment spans residues 449–469 (ICFAANVGLLFGVVCTIAIVI). The Cytoplasmic portion of the chain corresponds to 470–656 (GRFPRAMTVS…LSKLSDHSEV (187 aa)). The 150-residue stretch at 492-641 (TEMDSETLQQ…ESVSAAISHI (150 aa)) folds into the STAS domain. The tract at residues 641–656 (IHSNKNLSKLSDHSEV) is membrane targeting.

The protein belongs to the SLC26A/SulP transporter (TC 2.A.53) family. As to expression, expressed in the thyroid gland (at protein level). Expressed in tonsillar high endothelial venule endothelial cells (HEVEC), placenta and in testis, expressed in a subgroup of basal cells in the epididymal ducts.

It localises to the basolateral cell membrane. The protein resides in the recycling endosome membrane. It is found in the apical cell membrane. The protein localises to the lateral cell membrane. It carries out the reaction chloride(in) = chloride(out). It catalyses the reaction iodide(out) = iodide(in). The catalysed reaction is bromide(in) = bromide(out). The enzyme catalyses oxalate(in) = oxalate(out). It carries out the reaction nitrate(in) = nitrate(out). It catalyses the reaction sulfate(in) = sulfate(out). The catalysed reaction is thiocyanate(in) = thiocyanate(out). The enzyme catalyses D-gluconate(in) = D-gluconate(out). It carries out the reaction hydrogencarbonate(in) = hydrogencarbonate(out). It catalyses the reaction hydrogencarbonate(in) + chloride(out) = hydrogencarbonate(out) + chloride(in). With respect to regulation, is active at both alkaline and acidic pH. Activity is inhibited by 4,4'-Di-isothiocyanatostilbene-2,2'-disulfonic acid (DIDS - an inhibitor of several anion channels and transporters). Functionally, acts as an anion channel mediating the transport of chloride, sulfate and oxalate ions. Mediates the transport of bromide, iodide, nitrate, gluconate, thiocyanate and bicarbonate ions. Its permeability towards bicarbonate is weak and increases when pH is above 7. Mediates thiocyanate transport in retinal pigment epithelium cells. Mediates iodide transport in the thyroid gland, playing an important role in the synthesis of thyroid hormones and the maintenance of thyroid function. Although it is an anion channel, according to PubMed:12736153 and PubMed:32119864 it has been shown to exhibit chloride-bicarbonate exchanger activity. The chain is Anion exchange transporter from Homo sapiens (Human).